The chain runs to 637 residues: Keratin, type II cytoskeletal 1 (637 aa).

Residues 1–187 form a head region; sequence MSLQCSSRSL…DPQIQKVKSQ (187 aa). Arg12 is subject to Omega-N-methylarginine. A phosphoserine mark is found at Ser21 and Ser24. Arg49 carries the post-translational modification Omega-N-methylarginine. Phosphoserine is present on Ser67. The stretch at 180-328 forms a coiled coil; the sequence is QIQKVKSQER…DIDFFSALYQ (149 aa). Positions 188-223 are coil 1A; that stretch reads EREQIKSLNDKFASFIDKVRFLEQQNQVLQTKWELL. Residues 188–501 enclose the IF rod domain; that stretch reads EREQIKSLND…KLLEGEEIRM (314 aa). Residues 224–243 form a linker 1 region; sequence QQVDTTTRTQNLDPFFENYI. A coil 1B region spans residues 244–334; the sequence is SILRRKVDSL…ALYQMEMSQM (91 aa). Lys284 carries the N6,N6-dimethyllysine modification. A linker 12 region spans residues 335-358; sequence QTQISETNVVLSMDNNRSLDLDGI. Ser352 bears the Phosphoserine mark. The coil 2 stretch occupies residues 359–497; the sequence is ISEVKAQYDS…ATYKKLLEGE (139 aa). The stretch at 397–483 forms a coiled coil; that stretch reads DSVRNTKMEI…QELMNTKLAL (87 aa). The tract at residues 498-637 is tail; it reads EIRMSGECTP…VSTSYSRGTK (140 aa). Disordered regions lie at residues 505–533 and 563–637; these read CTPNVSVSVSTSHTSMSGSSSRGGGSGGG and YGGG…RGTK. The segment covering 509–524 has biased composition (low complexity); it reads VSVSVSTSHTSMSGSS. Omega-N-methylarginine occurs at positions 526, 585, and 607. A compositionally biased stretch (gly residues) spans 563–618; the sequence is YGGGSGGGSYGGGSGGGSSGSHRGGSGGGGGSSGGSYGGSSGGGRGGSSSGGGGVK. A compositionally biased stretch (polar residues) spans 624-637; the sequence is TVKFVSTSYSRGTK.

Belongs to the intermediate filament family. As to quaternary structure, heterotetramer of two type I and two type II keratins. Heterodimer with KRT10. Two heterodimers of KRT1 and KRT10 form a heterotetramer. Forms a heterodimer with KRT14; the interaction is more abundant in the absence of KRT5. Interacts with PLEC isoform 1C, when in a heterodimer with KRT10. Interacts with ITGB1 in the presence of RACK1 and SRC, and with RACK1. Interacts with C1QBP; the association represents a cell surface kininogen receptor. Interacts with EPPK1; interaction is dependent of higher-order structure of intermediate filament. In terms of processing, undergoes deimination of some arginine residues (citrullination). As to expression, expressed in the infundibular regions of the ear, the interfollicular epidermis of the back, in the interscale regions containing hair follicles in the tail, and in the soles of the footpads (at protein level).

It localises to the cell membrane. Its subcellular location is the cytoplasm. Its function is as follows. May regulate the activity of kinases such as PKC and SRC via binding to integrin beta-1 (ITB1) and the receptor of activated protein C kinase 1 (RACK1). In complex with C1QBP is a high affinity receptor for kininogen-1/HMWK. In Mus musculus (Mouse), this protein is Keratin, type II cytoskeletal 1 (Krt1).